Here is an 879-residue protein sequence, read N- to C-terminus: MSVTPMMAQYLEIKAQYPDALLFYRMGDFYEMFFEDAVNAAEALDIALTKRGKHEGEDIPMCGVPVHAAEGYLLTLIRKGFRVAVGEQLESPAEAKKRGSKSVVKRDVVRLVTPGTLTEDSLLEARRHNFLVAYSELRDQAALAWADISTGAFHVMPVARVRLSPELARLAPSELIVADGPIFDATLPLAEEYKIPLTPLGKASFDSTAAEKRLCHLFNVSALDGFGTFNRAEISAMGAVVDYLEITQKGKLPLLQPPLQESEDRTVQIDASTRRNLELTRSLSGGRAGSLLSVVDRTVTPGGARLLEQRLSSPSRNLDVISARLEALDTIVEDPIRCDTLRGLLRKTPDIDRALSRLALDRGGPRDLAAIRNALSQGEDIERALQDPDLPTLLRDAAHSLEGFQDLLSLLDAALIAEPPLLARDGGFIAAGYDRELDEARTLRDEGRSVIAGLQKKYAEHTGISSLKIKHNNVLGYFIETTSTHAAKMQSAPMSDTYIHRQTTANQVRFTTVELSEIETKILNAGNLALEIEKRLYQRLSGAILDSAARLNQAARGFAEIDLVTALADLARAENWTRPRVDTSRAFHVDGGRHPVVEQALRHQGGDSFVANDCDLSPQDGAAIWLLTGPNMAGKSTFLRQNALIAVLAQMGSYVPAEAAHIGMISQLFSRVGASDDLARGRSTFMVEMVETAAILNQADDRALVILDEIGRGTATYDGLSIAWATLEHLHEVNRSRALFATHYHELTQLATKLTGVENATVSVKEWEGEVIFLHEVKKGAADRSYGVQVAQLAGLPASVVARARSVLDMLEKSSREGGGAGKVQIDDLPLFAAAPAPQPKPAQGPSPVEKLLEEIFPDDLTPREALETLYRLKDVSKG.

629 to 636 is an ATP binding site; that stretch reads GPNMAGKS.

This sequence belongs to the DNA mismatch repair MutS family.

Its function is as follows. This protein is involved in the repair of mismatches in DNA. It is possible that it carries out the mismatch recognition step. This protein has a weak ATPase activity. The protein is DNA mismatch repair protein MutS of Ruegeria sp. (strain TM1040) (Silicibacter sp.).